The sequence spans 118 residues: NADH-ubiquinone oxidoreductase chain 3 (118 aa).

2 helical membrane-spanning segments follow: residues Ile7–Leu27 and Ile87–Leu107.

This sequence belongs to the complex I subunit 3 family.

It localises to the mitochondrion membrane. It carries out the reaction a ubiquinone + NADH + 5 H(+)(in) = a ubiquinol + NAD(+) + 4 H(+)(out). Functionally, core subunit of the mitochondrial membrane respiratory chain NADH dehydrogenase (Complex I) that is believed to belong to the minimal assembly required for catalysis. Complex I functions in the transfer of electrons from NADH to the respiratory chain. The immediate electron acceptor for the enzyme is believed to be ubiquinone. The polypeptide is NADH-ubiquinone oxidoreductase chain 3 (ND3) (Solanum tuberosum (Potato)).